Reading from the N-terminus, the 199-residue chain is ATP-dependent Clp protease proteolytic subunit (199 aa).

Catalysis depends on Ser-103, which acts as the Nucleophile. His-128 is a catalytic residue.

This sequence belongs to the peptidase S14 family. Fourteen ClpP subunits assemble into 2 heptameric rings which stack back to back to give a disk-like structure with a central cavity, resembling the structure of eukaryotic proteasomes.

It is found in the cytoplasm. It catalyses the reaction Hydrolysis of proteins to small peptides in the presence of ATP and magnesium. alpha-casein is the usual test substrate. In the absence of ATP, only oligopeptides shorter than five residues are hydrolyzed (such as succinyl-Leu-Tyr-|-NHMec, and Leu-Tyr-Leu-|-Tyr-Trp, in which cleavage of the -Tyr-|-Leu- and -Tyr-|-Trp bonds also occurs).. Its function is as follows. Cleaves peptides in various proteins in a process that requires ATP hydrolysis. Has a chymotrypsin-like activity. Plays a major role in the degradation of misfolded proteins. The protein is ATP-dependent Clp protease proteolytic subunit of Photobacterium profundum (strain SS9).